The following is a 405-amino-acid chain: Acetyl-CoA decarbonylase/synthase complex subunit delta (405 aa).

It belongs to the CdhD family. As to quaternary structure, heterodimer of delta and gamma chains. The ACDS complex is made up of alpha, epsilon, beta, gamma and delta chains with a probable stoichiometry of (alpha(2)epsilon(2))(4)-beta(8)-(gamma(1)delta(1))(8).

Its function is as follows. Part of a complex that catalyzes the reversible cleavage of acetyl-CoA, allowing autotrophic growth from CO(2). Probably maintains the overall quaternary structure of the ACDS complex. The protein is Acetyl-CoA decarbonylase/synthase complex subunit delta of Methanocaldococcus jannaschii (strain ATCC 43067 / DSM 2661 / JAL-1 / JCM 10045 / NBRC 100440) (Methanococcus jannaschii).